A 340-amino-acid chain; its full sequence is Deubiquitinase SseL (340 aa).

The active site involves H223. C285 serves as the catalytic Nucleophile.

The protein belongs to the peptidase C79 family.

It localises to the secreted. It is found in the host cytoplasm. Functionally, effector proteins function to alter host cell physiology and promote bacterial survival in host tissues. This protease targets the host cell ubiquitin pathway by acting as a deubiquitinase in infected host cells. The polypeptide is Deubiquitinase SseL (sseL) (Salmonella paratyphi A (strain ATCC 9150 / SARB42)).